The following is a 468-amino-acid chain: Cysteine--tRNA ligase (468 aa).

Cys36 contributes to the Zn(2+) binding site. A 'HIGH' region motif is present at residues 38–48; it reads PTVYNRSHIGN. Zn(2+) contacts are provided by Cys216, His241, and Glu245. Residues 274–278 carry the 'KMSKS' region motif; the sequence is KMSKS. Lys277 serves as a coordination point for ATP.

Belongs to the class-I aminoacyl-tRNA synthetase family. Monomer. Zn(2+) is required as a cofactor.

Its subcellular location is the cytoplasm. The enzyme catalyses tRNA(Cys) + L-cysteine + ATP = L-cysteinyl-tRNA(Cys) + AMP + diphosphate. The polypeptide is Cysteine--tRNA ligase (Parvibaculum lavamentivorans (strain DS-1 / DSM 13023 / NCIMB 13966)).